Consider the following 399-residue polypeptide: Elongation factor Tu (399 aa).

The region spanning 10-209 is the tr-type G domain; that stretch reads KPHVNIGTIG…AVDDYIPTPA (200 aa). Positions 19–26 are G1; sequence GHVDHGKT. 19–26 contributes to the GTP binding site; it reads GHVDHGKT. Residue Thr26 participates in Mg(2+) binding. The G2 stretch occupies residues 60–64; that stretch reads GITIA. The G3 stretch occupies residues 81-84; sequence DCPG. Residues 81-85 and 136-139 each bind GTP; these read DCPGH and NKAD. Positions 136–139 are G4; sequence NKAD. Residues 174 to 176 are G5; the sequence is SAL.

This sequence belongs to the TRAFAC class translation factor GTPase superfamily. Classic translation factor GTPase family. EF-Tu/EF-1A subfamily. As to quaternary structure, monomer.

It localises to the cytoplasm. It carries out the reaction GTP + H2O = GDP + phosphate + H(+). GTP hydrolase that promotes the GTP-dependent binding of aminoacyl-tRNA to the A-site of ribosomes during protein biosynthesis. This chain is Elongation factor Tu, found in Campylobacter lari (strain RM2100 / D67 / ATCC BAA-1060).